The following is a 384-amino-acid chain: Succinyl-diaminopimelate desuccinylase (384 aa).

Zn(2+) is bound at residue His-71. Asp-73 is an active-site residue. Asp-104 is a Zn(2+) binding site. The Proton acceptor role is filled by Glu-139. The Zn(2+) site is built by Glu-140, Glu-168, and His-357.

It belongs to the peptidase M20A family. DapE subfamily. As to quaternary structure, homodimer. Zn(2+) serves as cofactor. It depends on Co(2+) as a cofactor.

The enzyme catalyses N-succinyl-(2S,6S)-2,6-diaminopimelate + H2O = (2S,6S)-2,6-diaminopimelate + succinate. It functions in the pathway amino-acid biosynthesis; L-lysine biosynthesis via DAP pathway; LL-2,6-diaminopimelate from (S)-tetrahydrodipicolinate (succinylase route): step 3/3. Functionally, catalyzes the hydrolysis of N-succinyl-L,L-diaminopimelic acid (SDAP), forming succinate and LL-2,6-diaminopimelate (DAP), an intermediate involved in the bacterial biosynthesis of lysine and meso-diaminopimelic acid, an essential component of bacterial cell walls. In Bradyrhizobium sp. (strain BTAi1 / ATCC BAA-1182), this protein is Succinyl-diaminopimelate desuccinylase.